The primary structure comprises 729 residues: ATP-dependent DNA helicase Hel308 (729 aa).

ATP-binding positions include Gln28 and 46–53; that span reads IPTASGKT. A Helicase ATP-binding domain is found at 33 to 199; sequence EKGLLEGRNL…WLEAELVVSE (167 aa). The short motif at 144-147 is the DEAH box element; sequence DEVH. The 195-residue stretch at 232–426 folds into the Helicase C-terminal domain; it reads AVNLALDTLK…SKLGTENALR (195 aa). A disordered region spans residues 706–729; it reads SSGIIASEPPEKSPYSGQKTISDY. Residues 720–729 show a composition bias toward polar residues; the sequence is YSGQKTISDY.

It belongs to the helicase family. Hel308 subfamily. Monomer.

The catalysed reaction is Couples ATP hydrolysis with the unwinding of duplex DNA by translocating in the 3'-5' direction.. The enzyme catalyses ATP + H2O = ADP + phosphate + H(+). Functionally, DNA-dependent ATPase and 3'-5' DNA helicase that may be involved in repair of stalled replication forks. The sequence is that of ATP-dependent DNA helicase Hel308 from Methanosarcina barkeri (strain Fusaro / DSM 804).